The following is a 468-amino-acid chain: MAGVNGDRKGKKDDNGLGTAIDFVLSNAKLVLGVGGAAMLGIATLAVKRMYDRALSAPSSPTKADPSGRRSWEEPSWLGSSPRTLNHDMKQNVSRSLQTLPTSSSSFKPDSLHRGLARGGRPAKAELQRARLRLSLQEHLWAFFHERVTIPSEEQSVARRAALDICAELRVFLHAKLPDMPLREMYLSGSLYDDLQVVTADHAQLMVPLILEKNLWSSIPGEDTIMNIPGFSLVRRENLEYFPRGSSYWDRCMVGGYLSPKSVLEVFEKLVAGSINWPAIGSVLDYVIRPVVPSETLTLEVQYETDRRLYVDFLPLLVMEDGVSLIAKPHRLAAERHENLWRQSFRVAETAKLRALDQEDAGCRSVCLKILKAVCKLNPALARLNASQLTNAILLLSEQEGDWTQEALADRFMQLLRALVGHLEAGRMPCTLNLKVNLLCELTPQEIDELGYTLYCALSDPESLLRTV.

The Mitochondrial intermembrane portion of the chain corresponds to methionine 1–lysine 29. The chain crosses the membrane as a helical span at residues leucine 30–valine 47. At lysine 48–valine 468 the chain is on the cytoplasmic side. The dimerization stretch occupies residues methionine 50–glutamine 196. The disordered stretch occupies residues serine 56–alanine 123. Residues glutamine 91–lysine 108 are compositionally biased toward polar residues. Positions alanine 161 to arginine 170 are important for interaction with DNM1L. Residues serine 188, serine 190, and histidine 202 each coordinate ADP. Residues arginine 235–arginine 244 are important for interaction with DNM1L. Serine 344, arginine 346, and lysine 372 together coordinate ADP.

This sequence belongs to the MID49/MID51 family. Homodimer.

The protein resides in the mitochondrion outer membrane. Mitochondrial outer membrane protein which regulates mitochondrial fission/fusion dynamics. Promotes the recruitment and association of the fission mediator dynamin-related protein 1 (DNM1L) to the mitochondrial surface independently of the mitochondrial fission FIS1 and MFF proteins. Regulates DNM1L GTPase activity and DNM1L oligomerization. In Danio rerio (Zebrafish), this protein is Mitochondrial dynamics protein MID51 (mief1).